We begin with the raw amino-acid sequence, 236 residues long: Small ribosomal subunit protein uS3 (236 aa).

The KH type-2 domain maps to 39-107; the sequence is IREILHKELK…DVVINIVEIR (69 aa). The tract at residues 213 to 236 is disordered; that stretch reads MAQDKRMNEGGGESPSPRSRRDAA.

Belongs to the universal ribosomal protein uS3 family. In terms of assembly, part of the 30S ribosomal subunit. Forms a tight complex with proteins S10 and S14.

Its function is as follows. Binds the lower part of the 30S subunit head. Binds mRNA in the 70S ribosome, positioning it for translation. The protein is Small ribosomal subunit protein uS3 of Bradyrhizobium sp. (strain ORS 278).